The primary structure comprises 695 residues: F-box only protein 34 (695 aa).

3 disordered regions span residues 239 to 275 (GQSR…QGEP), 316 to 373 (LTNG…CPSL), and 472 to 524 (GQDQ…PGGS). Residues 556 to 608 (QQYMACLPHHIIVKIFRLLPTLSLAILKCTCRYFKSIIEYYNIRPADSRWVRD) enclose the F-box domain.

As to quaternary structure, directly interacts with SKP1 and CUL1.

Functionally, substrate-recognition component of the SCF (SKP1-CUL1-F-box protein)-type E3 ubiquitin ligase complex. In Mus musculus (Mouse), this protein is F-box only protein 34 (Fbxo34).